The sequence spans 420 residues: Ribulose bisphosphate carboxylase large chain (420 aa).

Substrate-binding residues include Asn103 and Thr153. Lys155 (proton acceptor) is an active-site residue. Position 157 (Lys157) interacts with substrate. Residues Lys181, Asp183, and Glu184 each contribute to the Mg(2+) site. The residue at position 181 (Lys181) is an N6-carboxylysine. The active-site Proton acceptor is His274. 3 residues coordinate substrate: Arg275, His307, and Ser359.

This sequence belongs to the RuBisCO large chain family. Type I subfamily. As to quaternary structure, heterohexadecamer of 8 large chains and 8 small chains; disulfide-linked. The disulfide link is formed within the large subunit homodimers. The cofactor is Mg(2+). In terms of processing, the disulfide bond which can form in the large chain dimeric partners within the hexadecamer appears to be associated with oxidative stress and protein turnover.

The protein resides in the plastid. It is found in the chloroplast. The enzyme catalyses 2 (2R)-3-phosphoglycerate + 2 H(+) = D-ribulose 1,5-bisphosphate + CO2 + H2O. The catalysed reaction is D-ribulose 1,5-bisphosphate + O2 = 2-phosphoglycolate + (2R)-3-phosphoglycerate + 2 H(+). Functionally, ruBisCO catalyzes two reactions: the carboxylation of D-ribulose 1,5-bisphosphate, the primary event in carbon dioxide fixation, as well as the oxidative fragmentation of the pentose substrate in the photorespiration process. Both reactions occur simultaneously and in competition at the same active site. This chain is Ribulose bisphosphate carboxylase large chain, found in Anemia mexicana (Mexican fern).